The sequence spans 310 residues: Mycothiol acetyltransferase (310 aa).

N-acetyltransferase domains follow at residues 5-155 and 160-309; these read TTVE…HPAR and PPFR…LPAA. 80-82 contributes to the acetyl-CoA binding site; it reads LLV. 1D-myo-inositol 2-(L-cysteinylamino)-2-deoxy-alpha-D-glucopyranoside contacts are provided by D187, K226, and E238. 242 to 244 provides a ligand contact to acetyl-CoA; the sequence is IAT. Residue Y276 coordinates 1D-myo-inositol 2-(L-cysteinylamino)-2-deoxy-alpha-D-glucopyranoside. 281-286 is a binding site for acetyl-CoA; it reads NERALR.

The protein belongs to the acetyltransferase family. MshD subfamily. In terms of assembly, monomer.

The enzyme catalyses 1D-myo-inositol 2-(L-cysteinylamino)-2-deoxy-alpha-D-glucopyranoside + acetyl-CoA = mycothiol + CoA + H(+). In terms of biological role, catalyzes the transfer of acetyl from acetyl-CoA to desacetylmycothiol (Cys-GlcN-Ins) to form mycothiol. The protein is Mycothiol acetyltransferase of Acidimicrobium ferrooxidans (strain DSM 10331 / JCM 15462 / NBRC 103882 / ICP).